Here is a 458-residue protein sequence, read N- to C-terminus: ATP synthase subunit beta (458 aa).

Residue 148 to 155 (GGAGVGKT) participates in ATP binding.

The protein belongs to the ATPase alpha/beta chains family. F-type ATPases have 2 components, CF(1) - the catalytic core - and CF(0) - the membrane proton channel. CF(1) has five subunits: alpha(3), beta(3), gamma(1), delta(1), epsilon(1). CF(0) has three main subunits: a(1), b(2) and c(9-12). The alpha and beta chains form an alternating ring which encloses part of the gamma chain. CF(1) is attached to CF(0) by a central stalk formed by the gamma and epsilon chains, while a peripheral stalk is formed by the delta and b chains.

Its subcellular location is the cell inner membrane. The catalysed reaction is ATP + H2O + 4 H(+)(in) = ADP + phosphate + 5 H(+)(out). Produces ATP from ADP in the presence of a proton gradient across the membrane. The catalytic sites are hosted primarily by the beta subunits. The chain is ATP synthase subunit beta from Actinobacillus succinogenes (strain ATCC 55618 / DSM 22257 / CCUG 43843 / 130Z).